The sequence spans 445 residues: Phosphoglucosamine mutase (445 aa).

Catalysis depends on serine 102, which acts as the Phosphoserine intermediate. Residues serine 102, aspartate 241, aspartate 243, and aspartate 245 each contribute to the Mg(2+) site. Serine 102 is modified (phosphoserine).

Belongs to the phosphohexose mutase family. Mg(2+) serves as cofactor. Post-translationally, activated by phosphorylation.

It carries out the reaction alpha-D-glucosamine 1-phosphate = D-glucosamine 6-phosphate. In terms of biological role, catalyzes the conversion of glucosamine-6-phosphate to glucosamine-1-phosphate. The chain is Phosphoglucosamine mutase from Shigella flexneri serotype 5b (strain 8401).